The primary structure comprises 607 residues: CRS2-associated factor 2, chloroplastic (607 aa).

The disordered stretch occupies residues 1–75 (MSPPPPQRPS…GNGGNPAFRA (75 aa)). The N-terminal 79 residues, 1–79 (MSPPPPQRPS…NPAFRAPHLR (79 aa)), are a transit peptide targeting the chloroplast. CRM domains lie at 228–324 (EPLT…TRPR) and 346–442 (EGLT…YPKP). The interval 482-505 (KMFELWTNAIESSVALMLDDAEVD) is CRS2 binding. The tract at residues 550–576 (TEDEPETGTLEPQQHEFTESSDVAEDD) is disordered.

As to quaternary structure, interacts with CRS2 and RNA. Part of large ribonucleo-protein complexes that include group IIB introns, CRS2 and CAF2.

The protein localises to the plastid. It localises to the chloroplast stroma. In terms of biological role, required for the splicing of group IIB introns in chloroplasts. Forms splicing particles with CRS2. Interacts with RNA and confers intron specificity of the splicing particles. This chain is CRS2-associated factor 2, chloroplastic, found in Oryza sativa subsp. japonica (Rice).